Reading from the N-terminus, the 337-residue chain is Casein kinase I isoform alpha (337 aa).

Residues 20–288 enclose the Protein kinase domain; sequence YRVIRKIGSG…YLRQLFRILF (269 aa). ATP contacts are provided by residues 26–34 and K49; that span reads IGSGSFGDI. The active-site Proton acceptor is the D139.

This sequence belongs to the protein kinase superfamily. CK1 Ser/Thr protein kinase family. Casein kinase I subfamily. In terms of assembly, interacts with cos. Mg(2+) is required as a cofactor. Post-translationally, phosphorylated. The dephosphorylated kinase is active in the cytoplasm while the active kinase in the nucleus is phosphorylated.

It localises to the cytoplasm. The protein localises to the nucleus. It carries out the reaction L-seryl-[protein] + ATP = O-phospho-L-seryl-[protein] + ADP + H(+). The catalysed reaction is L-threonyl-[protein] + ATP = O-phospho-L-threonyl-[protein] + ADP + H(+). Activity increases following DNA damage. In terms of biological role, casein kinases are operationally defined by their preferential utilization of acidic proteins such as caseins as substrates. Can phosphorylate a large number of proteins. Negative regulator of wg signaling. Phosphorylates arm directly or indirectly and stimulates its degradation which prevents inappropriate wg signaling. Phosphorylates smo which promotes its accumulation at the cell surface and its signaling activity in response to hh. Together with dco, regulates proteolytic processing of ci by phosphorylating it, which promotes its binding to slmb, the F-box recognition component of the SCF(slmb) E3 ubiquitin-protein ligase required for ci processing. Inhibits condensin II interphase activity by promoting degradation of the Cap-H2 regulatory subunit and limiting the levels of chromatin-bound Cap-H2 which regulates interphase chromosome organization. The chain is Casein kinase I isoform alpha (CkIalpha) from Drosophila melanogaster (Fruit fly).